The following is a 228-amino-acid chain: Cytochrome c oxidase subunit 2 (228 aa).

Topologically, residues 1 to 26 (MATWANLGLQNSSSPLMEQLNFFHDH) are mitochondrial intermembrane. A helical membrane pass occupies residues 27–48 (TLLILIMITVMIAYIMFMLFFN). Residues 49–62 (KFTNRYLLHGQTIE) are Mitochondrial matrix-facing. Residues 63–82 (IIWTILPAIILMFIAFPSLR) form a helical membrane-spanning segment. Residues 83–228 (LLYLMDEINS…FIKWISSQMN (146 aa)) lie on the Mitochondrial intermembrane side of the membrane. Cu cation-binding residues include histidine 161, cysteine 196, glutamate 198, cysteine 200, histidine 204, and methionine 207. Residue glutamate 198 participates in Mg(2+) binding.

The protein belongs to the cytochrome c oxidase subunit 2 family. In terms of assembly, component of the cytochrome c oxidase (complex IV, CIV), a multisubunit enzyme composed of a catalytic core of 3 subunits and several supernumerary subunits. The complex exists as a monomer or a dimer and forms supercomplexes (SCs) in the inner mitochondrial membrane with ubiquinol-cytochrome c oxidoreductase (cytochrome b-c1 complex, complex III, CIII). It depends on Cu cation as a cofactor.

It localises to the mitochondrion inner membrane. The catalysed reaction is 4 Fe(II)-[cytochrome c] + O2 + 8 H(+)(in) = 4 Fe(III)-[cytochrome c] + 2 H2O + 4 H(+)(out). Functionally, component of the cytochrome c oxidase, the last enzyme in the mitochondrial electron transport chain which drives oxidative phosphorylation. The respiratory chain contains 3 multisubunit complexes succinate dehydrogenase (complex II, CII), ubiquinol-cytochrome c oxidoreductase (cytochrome b-c1 complex, complex III, CIII) and cytochrome c oxidase (complex IV, CIV), that cooperate to transfer electrons derived from NADH and succinate to molecular oxygen, creating an electrochemical gradient over the inner membrane that drives transmembrane transport and the ATP synthase. Cytochrome c oxidase is the component of the respiratory chain that catalyzes the reduction of oxygen to water. Electrons originating from reduced cytochrome c in the intermembrane space (IMS) are transferred via the dinuclear copper A center (CU(A)) of subunit 2 and heme A of subunit 1 to the active site in subunit 1, a binuclear center (BNC) formed by heme A3 and copper B (CU(B)). The BNC reduces molecular oxygen to 2 water molecules using 4 electrons from cytochrome c in the IMS and 4 protons from the mitochondrial matrix. The protein is Cytochrome c oxidase subunit 2 (COII) of Aedes aegypti (Yellowfever mosquito).